The sequence spans 200 residues: Large ribosomal subunit protein uL4 (200 aa).

A disordered region spans residues 38–68 (GRQGSKQQKTRSDVRGGGKRPWRQKGTGRAR). A compositionally biased stretch (basic residues) spans 54–65 (GGKRPWRQKGTG).

This sequence belongs to the universal ribosomal protein uL4 family. As to quaternary structure, part of the 50S ribosomal subunit.

Its function is as follows. One of the primary rRNA binding proteins, this protein initially binds near the 5'-end of the 23S rRNA. It is important during the early stages of 50S assembly. It makes multiple contacts with different domains of the 23S rRNA in the assembled 50S subunit and ribosome. In terms of biological role, forms part of the polypeptide exit tunnel. This chain is Large ribosomal subunit protein uL4, found in Pseudomonas syringae pv. tomato (strain ATCC BAA-871 / DC3000).